The chain runs to 248 residues: Small ribosomal subunit protein uS3 (248 aa).

In terms of domain architecture, KH type-2 spans 39 to 107 (IRQMLLKQLK…EVFINIVEIR (69 aa)). A disordered region spans residues 214–248 (AVDKRMTAESEGPSSGRPPRRDRDRDRDRDRDSAA). Over residues 232 to 248 (PRRDRDRDRDRDRDSAA) the composition is skewed to basic and acidic residues.

This sequence belongs to the universal ribosomal protein uS3 family. In terms of assembly, part of the 30S ribosomal subunit. Forms a tight complex with proteins S10 and S14.

Functionally, binds the lower part of the 30S subunit head. Binds mRNA in the 70S ribosome, positioning it for translation. This is Small ribosomal subunit protein uS3 from Azorhizobium caulinodans (strain ATCC 43989 / DSM 5975 / JCM 20966 / LMG 6465 / NBRC 14845 / NCIMB 13405 / ORS 571).